Consider the following 291-residue polypeptide: 4-diphosphocytidyl-2-C-methyl-D-erythritol kinase (291 aa).

Lys-10 is a catalytic residue. An ATP-binding site is contributed by 100-110; that stretch reads PIGGGLGGGSS. Residue Asp-142 is part of the active site.

The protein belongs to the GHMP kinase family. IspE subfamily. As to quaternary structure, homodimer.

It catalyses the reaction 4-CDP-2-C-methyl-D-erythritol + ATP = 4-CDP-2-C-methyl-D-erythritol 2-phosphate + ADP + H(+). Its pathway is isoprenoid biosynthesis; isopentenyl diphosphate biosynthesis via DXP pathway; isopentenyl diphosphate from 1-deoxy-D-xylulose 5-phosphate: step 3/6. Its function is as follows. Catalyzes the phosphorylation of the position 2 hydroxy group of 4-diphosphocytidyl-2C-methyl-D-erythritol. In Hamiltonella defensa subsp. Acyrthosiphon pisum (strain 5AT), this protein is 4-diphosphocytidyl-2-C-methyl-D-erythritol kinase.